A 499-amino-acid polypeptide reads, in one-letter code: Guanosine-5'-triphosphate,3'-diphosphate pyrophosphatase (499 aa).

The protein belongs to the GppA/Ppx family. GppA subfamily.

It carries out the reaction guanosine 3'-diphosphate 5'-triphosphate + H2O = guanosine 3',5'-bis(diphosphate) + phosphate + H(+). It participates in purine metabolism; ppGpp biosynthesis; ppGpp from GTP: step 2/2. Functionally, catalyzes the conversion of pppGpp to ppGpp. Guanosine pentaphosphate (pppGpp) is a cytoplasmic signaling molecule which together with ppGpp controls the 'stringent response', an adaptive process that allows bacteria to respond to amino acid starvation, resulting in the coordinated regulation of numerous cellular activities. The sequence is that of Guanosine-5'-triphosphate,3'-diphosphate pyrophosphatase from Klebsiella pneumoniae (strain 342).